A 186-amino-acid polypeptide reads, in one-letter code: Alkyl hydroperoxide reductase AhpD (186 aa).

The Proton donor role is filled by Cys-131. Cys-131 and Cys-134 form a disulfide bridge. The active-site Cysteine sulfenic acid (-SOH) intermediate is Cys-134.

This sequence belongs to the AhpD family.

The enzyme catalyses N(6)-[(R)-dihydrolipoyl]-L-lysyl-[lipoyl-carrier protein] + a hydroperoxide = N(6)-[(R)-lipoyl]-L-lysyl-[lipoyl-carrier protein] + an alcohol + H2O. Its function is as follows. Antioxidant protein with alkyl hydroperoxidase activity. Required for the reduction of the AhpC active site cysteine residues and for the regeneration of the AhpC enzyme activity. The polypeptide is Alkyl hydroperoxide reductase AhpD (Rhodospirillum centenum (strain ATCC 51521 / SW)).